A 534-amino-acid polypeptide reads, in one-letter code: Ankyrin repeat domain-containing protein 34C (534 aa).

ANK repeat units lie at residues 10-39 (TDGNSLLKAVWLGRLRLTRLLLEGGAYINE), 43-80 (KGETALMVACITKHVDQQSISKSKMVKYLLDNRADPNI), 84-114 (SGKTALIHACIRRAGGEVVSLLLENGADPSL), and 118-147 (TGASALVYAINADDKDALKHLLDACKAKGK). The interval 159 to 205 (SGTKTTKQYLNVPPSPKVEDRQSPPLCTTPSDVELKTSGLASPPSEK) is disordered. S301 is subject to Phosphoserine. Disordered stretches follow at residues 332–368 (YEKGQAPHPRLARRGTLPLDQEKSGMCPPGPSTLKDP) and 384–403 (QPVGDPPNSMSLESGKGPLD). A Phosphoserine modification is found at S446. A disordered region spans residues 480 to 503 (SKPASPLASGLKSMAPVAPNSPKR).

The protein belongs to the ANKRD34 family.

The chain is Ankyrin repeat domain-containing protein 34C (Ankrd34c) from Mus musculus (Mouse).